A 460-amino-acid polypeptide reads, in one-letter code: MLO-like protein 9 (460 aa).

Topologically, residues 1–21 (MAGGGGGGGGEGPRQLDQTPT) are extracellular. A helical membrane pass occupies residues 22 to 42 (WAVSTVCGVIILISIILELII). The Cytoplasmic portion of the chain corresponds to 43–67 (HKVGEVFERKKKKALFEALEKIKNE). Residues 68-88 (LMVLGFISLLLTFGQNYIASI) form a helical membrane-spanning segment. Over 89-158 (CVPSRYGHAM…ISLNALHQVH (70 aa)) the chain is Extracellular. The chain crosses the membrane as a helical span at residues 159-179 (IFIFFLAVFHVIYSAITMMLG). At 180 to 289 (RAKIRGWKVW…KVVVGIRPEL (110 aa)) the chain is on the cytoplasmic side. The helical transmembrane segment at 290-310 (WAFVMLFLLFDVHGWYVTAVI) threads the bilayer. At 311–315 (TMIPP) the chain is on the extracellular side. A helical transmembrane segment spans residues 316 to 336 (LLTLAIGTKLQAIISYMALEI). Residues 337-366 (QERHAVIQGMPVVNVSDQHFWFEKPDLVLH) lie on the Cytoplasmic side of the membrane. A helical transmembrane segment spans residues 367 to 387 (MIHFVLFQNAFEITYFFWIWY). Residues 388-398 (EFGLRSCFHHH) are Extracellular-facing. A helical transmembrane segment spans residues 399–419 (FGLIIIRVCLGVGVQFLCSYI). Topologically, residues 420-460 (TLPLYALVTQMGSTMKRSVFDEQTSKALEQWHKKARKKNEK) are cytoplasmic. Residues 441–460 (EQTSKALEQWHKKARKKNEK) form a calmodulin-binding region.

This sequence belongs to the MLO family.

It is found in the membrane. Its function is as follows. May be involved in modulation of pathogen defense and leaf cell death. Activity seems to be regulated by Ca(2+)-dependent calmodulin binding and seems not to require heterotrimeric G proteins. This Arabidopsis thaliana (Mouse-ear cress) protein is MLO-like protein 9 (MLO9).